A 218-amino-acid polypeptide reads, in one-letter code: MGEPVVVGRVGRPHGIRGDVTVDVRTDLPERRFAPGARLVRQVADGPASRPAADAAGAADAVGTAAGPGSAGDSGAARAAGPPVATVLSVVASRWHSGRLLVRFDGVTDRDAAEALRGSFLTIDSDECGPAVDPDDEDDDGELWWDRDLVGLHARTPAGDVLGEVVDVIHSPGGEILAIGRPEGGEYLVPFVREIVPTVDPAAGHIVVDPPPGLLDLD.

The PRC barrel domain maps to 141–214; the sequence is GELWWDRDLV…HIVVDPPPGL (74 aa).

Belongs to the RimM family. As to quaternary structure, binds ribosomal protein uS19.

The protein resides in the cytoplasm. Its function is as follows. An accessory protein needed during the final step in the assembly of 30S ribosomal subunit, possibly for assembly of the head region. Essential for efficient processing of 16S rRNA. May be needed both before and after RbfA during the maturation of 16S rRNA. It has affinity for free ribosomal 30S subunits but not for 70S ribosomes. This is Ribosome maturation factor RimM from Parafrankia sp. (strain EAN1pec).